Reading from the N-terminus, the 194-residue chain is ATP-dependent Clp protease proteolytic subunit (194 aa).

Ser-98 functions as the Nucleophile in the catalytic mechanism. The active site involves His-123.

Belongs to the peptidase S14 family. Fourteen ClpP subunits assemble into 2 heptameric rings which stack back to back to give a disk-like structure with a central cavity, resembling the structure of eukaryotic proteasomes.

The protein resides in the cytoplasm. It catalyses the reaction Hydrolysis of proteins to small peptides in the presence of ATP and magnesium. alpha-casein is the usual test substrate. In the absence of ATP, only oligopeptides shorter than five residues are hydrolyzed (such as succinyl-Leu-Tyr-|-NHMec, and Leu-Tyr-Leu-|-Tyr-Trp, in which cleavage of the -Tyr-|-Leu- and -Tyr-|-Trp bonds also occurs).. Cleaves peptides in various proteins in a process that requires ATP hydrolysis. Has a chymotrypsin-like activity. Plays a major role in the degradation of misfolded proteins. The polypeptide is ATP-dependent Clp protease proteolytic subunit (Staphylococcus saprophyticus subsp. saprophyticus (strain ATCC 15305 / DSM 20229 / NCIMB 8711 / NCTC 7292 / S-41)).